A 140-amino-acid chain; its full sequence is UPF0102 protein ACIAD1132 (140 aa).

The protein belongs to the UPF0102 family.

This is UPF0102 protein ACIAD1132 from Acinetobacter baylyi (strain ATCC 33305 / BD413 / ADP1).